A 149-amino-acid polypeptide reads, in one-letter code: Calmodulin (149 aa).

At Ala-2 the chain carries N-acetylalanine. 4 consecutive EF-hand domains span residues 8–43, 44–79, 81–116, and 117–149; these read EQIS…LGQN, PTEA…KMRD, DSEE…LGEK, and LTDN…MLSK. Ca(2+) contacts are provided by Asp-21, Asp-23, Asp-25, Thr-27, Glu-32, Asp-57, Asp-59, Asn-61, Thr-63, Glu-68, Asp-94, Asp-96, Asn-98, Tyr-100, Glu-105, Asp-130, Asp-132, Asp-134, Gln-136, and Glu-141.

The protein belongs to the calmodulin family. Post-translationally, trimethylation of Lys-116 observed in other calmodulins is absent here.

In terms of biological role, calmodulin mediates the control of a large number of enzymes, ion channels and other proteins by Ca(2+). Among the enzymes to be stimulated by the calmodulin-Ca(2+) complex are a number of protein kinases and phosphatases. The polypeptide is Calmodulin (CMD1) (Pleurotus cornucopiae (Cornucopia mushroom)).